We begin with the raw amino-acid sequence, 910 residues long: DNA mismatch repair protein MutS (910 aa).

The span at 1–11 (MEAKVEEKEPE) shows a compositional bias: basic and acidic residues. The tract at residues 1-21 (MEAKVEEKEPEPVENAGPDAP) is disordered. 658–665 (GPNMGGKS) lines the ATP pocket.

It belongs to the DNA mismatch repair MutS family.

Its function is as follows. This protein is involved in the repair of mismatches in DNA. It is possible that it carries out the mismatch recognition step. This protein has a weak ATPase activity. This chain is DNA mismatch repair protein MutS, found in Brucella melitensis biotype 1 (strain ATCC 23456 / CCUG 17765 / NCTC 10094 / 16M).